The primary structure comprises 420 residues: ATP phosphoribosyltransferase regulatory subunit (420 aa).

It belongs to the class-II aminoacyl-tRNA synthetase family. HisZ subfamily. As to quaternary structure, heteromultimer composed of HisG and HisZ subunits.

The protein localises to the cytoplasm. Its pathway is amino-acid biosynthesis; L-histidine biosynthesis; L-histidine from 5-phospho-alpha-D-ribose 1-diphosphate: step 1/9. In terms of biological role, required for the first step of histidine biosynthesis. May allow the feedback regulation of ATP phosphoribosyltransferase activity by histidine. The chain is ATP phosphoribosyltransferase regulatory subunit from Bacillus cereus (strain ZK / E33L).